Consider the following 188-residue polypeptide: Elongation factor P (188 aa).

The protein belongs to the elongation factor P family.

It is found in the cytoplasm. It participates in protein biosynthesis; polypeptide chain elongation. Functionally, involved in peptide bond synthesis. Stimulates efficient translation and peptide-bond synthesis on native or reconstituted 70S ribosomes in vitro. Probably functions indirectly by altering the affinity of the ribosome for aminoacyl-tRNA, thus increasing their reactivity as acceptors for peptidyl transferase. This is Elongation factor P from Chloroherpeton thalassium (strain ATCC 35110 / GB-78).